We begin with the raw amino-acid sequence, 343 residues long: F-box/kelch-repeat protein At3g08810 (343 aa).

Positions 1 to 15 (MSYPERKRKRSRWSK) are enriched in basic residues. The segment at 1–25 (MSYPERKRKRSRWSKPHSTQNPSPS) is disordered. The 47-residue stretch at 20–66 (QNPSPSLPDDVLLSIFARVSRLYYPTLSHVSESFRSLLASPELYKAR) folds into the F-box domain. Kelch repeat units follow at residues 134-181 (DIYN…VRDG), 183-224 (QGGH…LPDS), and 225-271 (YCVI…VILA).

This is F-box/kelch-repeat protein At3g08810 from Arabidopsis thaliana (Mouse-ear cress).